A 137-amino-acid chain; its full sequence is Peptide methionine sulfoxide reductase MsrB (137 aa).

One can recognise a MsrB domain in the interval 7 to 129 (AEELKKNLSD…NSASLRFTDG (123 aa)). Zn(2+)-binding residues include Cys46, Cys49, Cys95, and Cys98. Residue Cys118 is the Nucleophile of the active site.

The protein belongs to the MsrB Met sulfoxide reductase family. It depends on Zn(2+) as a cofactor.

It carries out the reaction L-methionyl-[protein] + [thioredoxin]-disulfide + H2O = L-methionyl-(R)-S-oxide-[protein] + [thioredoxin]-dithiol. This Shigella dysenteriae serotype 1 (strain Sd197) protein is Peptide methionine sulfoxide reductase MsrB.